The following is a 374-amino-acid chain: F-box/LRR-repeat protein 8 (374 aa).

The region spanning 2-48 (AEPGEGLPEEVLALIFRHLSLRDRAAAARVCRAWAAAATCSAVWHDT) is the F-box domain.

As to quaternary structure, directly interacts with SKP1 and CUL1.

Functionally, substrate-recognition component of the SCF (SKP1-CUL1-F-box protein)-type E3 ubiquitin ligase complex. This Homo sapiens (Human) protein is F-box/LRR-repeat protein 8 (FBXL8).